The chain runs to 216 residues: RNA chaperone ProQ (216 aa).

The span at 105–115 (ESKAKVAEKRK) shows a compositional bias: basic and acidic residues. The tract at residues 105–159 (ESKAKVAEKRKAQNAAKPGAKKSYKSKTVPAFKSSPKGTNQDNVKPKAKLPPPEK) is disordered.

It belongs to the ProQ family.

It is found in the cytoplasm. RNA chaperone with significant RNA binding, RNA strand exchange and RNA duplexing activities. This is RNA chaperone ProQ from Pseudoalteromonas atlantica (strain T6c / ATCC BAA-1087).